The following is a 343-amino-acid chain: D-alanine--D-alanine ligase (343 aa).

One can recognise an ATP-grasp domain in the interval 129–335 (KYVLEHFNIK…YSKLIDELIE (207 aa)). 162–217 (ENKLGYAVFIKPSNSGSSVGITKAHNRKELEAGLEEAMKYDRKILVEEALNAREIE) is a binding site for ATP. D288, E302, and N304 together coordinate Mg(2+).

Belongs to the D-alanine--D-alanine ligase family. Mg(2+) serves as cofactor. Mn(2+) is required as a cofactor.

Its subcellular location is the cytoplasm. The catalysed reaction is 2 D-alanine + ATP = D-alanyl-D-alanine + ADP + phosphate + H(+). It functions in the pathway cell wall biogenesis; peptidoglycan biosynthesis. Its function is as follows. Cell wall formation. The protein is D-alanine--D-alanine ligase of Clostridium acetobutylicum (strain ATCC 824 / DSM 792 / JCM 1419 / IAM 19013 / LMG 5710 / NBRC 13948 / NRRL B-527 / VKM B-1787 / 2291 / W).